Consider the following 203-residue polypeptide: Glycerol-3-phosphate acyltransferase (203 aa).

A run of 6 helical transmembrane segments spans residues M1–P21, V52–V72, A73–I93, I115–I135, I140–G160, and Q161–R181.

It belongs to the PlsY family. In terms of assembly, probably interacts with PlsX.

The protein localises to the cell inner membrane. The enzyme catalyses an acyl phosphate + sn-glycerol 3-phosphate = a 1-acyl-sn-glycero-3-phosphate + phosphate. It participates in lipid metabolism; phospholipid metabolism. Its function is as follows. Catalyzes the transfer of an acyl group from acyl-phosphate (acyl-PO(4)) to glycerol-3-phosphate (G3P) to form lysophosphatidic acid (LPA). This enzyme utilizes acyl-phosphate as fatty acyl donor, but not acyl-CoA or acyl-ACP. This is Glycerol-3-phosphate acyltransferase from Synechococcus sp. (strain JA-3-3Ab) (Cyanobacteria bacterium Yellowstone A-Prime).